The sequence spans 380 residues: Cytochrome b (380 aa).

A run of 4 helical transmembrane segments spans residues 33–53 (LGSLLGTCLVLQIVTGLFLAM), 77–98 (WVIRYLHANGASMFFICLFLHI), 113–133 (WNIGIILLLATMATAFMGYVL), and 178–198 (FFTFHFILPFIITALVALHLL). Residues His-83 and His-97 each contribute to the heme b site. Residues His-182 and His-196 each contribute to the heme b site. His-201 lines the a ubiquinone pocket. Transmembrane regions (helical) follow at residues 226–246 (TKDILGLFLLLLTLMSLVLFS), 288–308 (LGGVLALLLSILILMTIPMLH), 320–340 (LSQLTYWLWAANLLTLTWIGG), and 347–367 (FITIGQVTSVLYFITILILVP).

Belongs to the cytochrome b family. In terms of assembly, the cytochrome bc1 complex contains 11 subunits: 3 respiratory subunits (MT-CYB, CYC1 and UQCRFS1), 2 core proteins (UQCRC1 and UQCRC2) and 6 low-molecular weight proteins (UQCRH/QCR6, UQCRB/QCR7, UQCRQ/QCR8, UQCR10/QCR9, UQCR11/QCR10 and a cleavage product of UQCRFS1). This cytochrome bc1 complex then forms a dimer. Heme b serves as cofactor.

The protein resides in the mitochondrion inner membrane. Functionally, component of the ubiquinol-cytochrome c reductase complex (complex III or cytochrome b-c1 complex) that is part of the mitochondrial respiratory chain. The b-c1 complex mediates electron transfer from ubiquinol to cytochrome c. Contributes to the generation of a proton gradient across the mitochondrial membrane that is then used for ATP synthesis. The polypeptide is Cytochrome b (MT-CYB) (Nomascus leucogenys (Northern white-cheeked gibbon)).